Here is a 147-residue protein sequence, read N- to C-terminus: Large ribosomal subunit protein uL13 (147 aa).

The protein belongs to the universal ribosomal protein uL13 family. As to quaternary structure, part of the 50S ribosomal subunit.

This protein is one of the early assembly proteins of the 50S ribosomal subunit, although it is not seen to bind rRNA by itself. It is important during the early stages of 50S assembly. This is Large ribosomal subunit protein uL13 from Renibacterium salmoninarum (strain ATCC 33209 / DSM 20767 / JCM 11484 / NBRC 15589 / NCIMB 2235).